Here is a 158-residue protein sequence, read N- to C-terminus: Protein NrdI (158 aa).

This sequence belongs to the NrdI family.

In terms of biological role, probably involved in ribonucleotide reductase function. The protein is Protein NrdI of Rhodococcus jostii (strain RHA1).